The chain runs to 639 residues: Phosphomethylpyrimidine synthase (639 aa).

Residues 49–71 (DTPTDFGGEQNRPVRVYDTSGPY) are disordered. Substrate-binding positions include N231, M260, Y289, H325, 345 to 347 (SRG), 386 to 389 (DGLR), and E425. H429 is a binding site for Zn(2+). Substrate is bound at residue Y452. Position 493 (H493) interacts with Zn(2+). 3 residues coordinate [4Fe-4S] cluster: C573, C576, and C581.

This sequence belongs to the ThiC family. As to quaternary structure, homodimer. Requires [4Fe-4S] cluster as cofactor.

The enzyme catalyses 5-amino-1-(5-phospho-beta-D-ribosyl)imidazole + S-adenosyl-L-methionine = 4-amino-2-methyl-5-(phosphooxymethyl)pyrimidine + CO + 5'-deoxyadenosine + formate + L-methionine + 3 H(+). It functions in the pathway cofactor biosynthesis; thiamine diphosphate biosynthesis. In terms of biological role, catalyzes the synthesis of the hydroxymethylpyrimidine phosphate (HMP-P) moiety of thiamine from aminoimidazole ribotide (AIR) in a radical S-adenosyl-L-methionine (SAM)-dependent reaction. The protein is Phosphomethylpyrimidine synthase of Teredinibacter turnerae (strain ATCC 39867 / T7901).